The sequence spans 394 residues: Protein arginine N-methyltransferase 8 (394 aa).

Glycine 2 is lipidated: N-myristoyl glycine. The interval 21 to 40 (VESTEVSSAPPQPPQPVIPA) is disordered. 2 consecutive short sequence motifs (SH3-binding) follow at residues 29-42 (APPQPPQPVIPAKP) and 53-58 (PSCPGR). Positions 30–39 (PPQPPQPVIP) are enriched in pro residues. Arginine 58 carries the post-translational modification Omega-N-methylarginine; by PRMT8. The residue at position 73 (arginine 73) is an Asymmetric dimethylarginine; by PRMT8. The region spanning 73–394 (RDYYFDSYAH…TSVSNDYKMR (322 aa)) is the SAM-dependent MTase PRMT-type domain. S-adenosyl-L-methionine-binding positions include histidine 86, arginine 95, glycine 119, 119–122 (GSGT), glutamate 141, and glutamate 170. Residues glutamate 185 and glutamate 194 contribute to the active site.

The protein belongs to the class I-like SAM-binding methyltransferase superfamily. Protein arginine N-methyltransferase family. PRMT8 subfamily. Homodimer. Tetramer; individual homodimers associates to form a homotetramer. Homooctamer; individual homodimers associates to form a homooctamer and homooligomerization is required for proper localization to the cell membrane. Heterodimer with PRMT1; heterodimerization may recruit PRMT1 activity to the plasma membrane. Interacts with PRMT2 (via the SH3 domain). Interacts with FYN (via the SH3 domain). Interacts with EWS; independently of EWS methylation status. Brain-specific. Only expressed in neurons, especially in the somatosensory and limbic systems, and a part of motor system. Highly expressed in all of the regions related to general somatosensory system. Expressed in most of the relay nuclei intervening the special somatosensory system, such as the auditory, visual and vestibular systems. Also present in forebrain limbic areas and thalamic nuclei relevant to limbic areas and in areas related to the motor system, such as the caudate putamen, Purkinje cells, inferior olivary nucleus and cerebellar nuclei.

The protein localises to the cell membrane. It carries out the reaction L-arginyl-[protein] + S-adenosyl-L-methionine = N(omega)-methyl-L-arginyl-[protein] + S-adenosyl-L-homocysteine + H(+). The enzyme catalyses L-arginyl-[protein] + 2 S-adenosyl-L-methionine = N(omega),N(omega)-dimethyl-L-arginyl-[protein] + 2 S-adenosyl-L-homocysteine + 2 H(+). In terms of biological role, S-adenosyl-L-methionine-dependent and membrane-associated arginine methyltransferase that can both catalyze the formation of omega-N monomethylarginine (MMA) and asymmetrical dimethylarginine (aDMA) in proteins such as NIFK, myelin basic protein, histone H4, H2A and H2A/H2B dimer. Able to mono- and dimethylate EWS protein; however its precise role toward EWS remains unclear as it still interacts with fully methylated EWS. The protein is Protein arginine N-methyltransferase 8 of Mus musculus (Mouse).